The sequence spans 157 residues: Protein Smg homolog (157 aa).

The protein belongs to the Smg family.

This is Protein Smg homolog from Xanthomonas euvesicatoria pv. vesicatoria (strain 85-10) (Xanthomonas campestris pv. vesicatoria).